We begin with the raw amino-acid sequence, 128 residues long: Large ribosomal subunit protein bL12 (128 aa).

This sequence belongs to the bacterial ribosomal protein bL12 family. Homodimer. Part of the ribosomal stalk of the 50S ribosomal subunit. Forms a multimeric L10(L12)X complex, where L10 forms an elongated spine to which 2 to 4 L12 dimers bind in a sequential fashion. Binds GTP-bound translation factors.

Functionally, forms part of the ribosomal stalk which helps the ribosome interact with GTP-bound translation factors. Is thus essential for accurate translation. The chain is Large ribosomal subunit protein bL12 from Corynebacterium efficiens (strain DSM 44549 / YS-314 / AJ 12310 / JCM 11189 / NBRC 100395).